Here is a 451-residue protein sequence, read N- to C-terminus: CCAAT/enhancer-binding protein (451 aa).

3 disordered regions span residues 210–236, 267–298, and 328–389; these read TYNN…EPID, QSNN…NSTN, and LKHH…AKVR. 3 stretches are compositionally biased toward low complexity: residues 218–228, 268–298, and 334–350; these read ENSSVGSDSSS, SNNL…NSTN, and LQQT…QHAQ. The segment covering 359–370 has biased composition (basic and acidic residues); sequence KHVDKGTEEYRR. Residues 365–428 enclose the bZIP domain; that stretch reads TEEYRRRRER…SLHKQIYMQL (64 aa). The segment at 369–398 is basic motif; sequence RRRRERNNIAVRKSREKAKVRSKEVEERVK. The segment at 400-407 is leucine-zipper; sequence LLKEKDAL.

This sequence belongs to the bZIP family. C/EBP subfamily. As to quaternary structure, binds DNA as a dimer and can form stable heterodimers.

The protein localises to the nucleus. May be required for the expression of gene products mediating border cell migration. Among the DNA sequences that this protein binds with high affinity is a conserved site within the promoter of its gene. The polypeptide is CCAAT/enhancer-binding protein (slbo) (Drosophila virilis (Fruit fly)).